A 1004-amino-acid polypeptide reads, in one-letter code: Hyaluronate lyase HylB (1004 aa).

The signal sequence occupies residues 1-29 (MKNRKIWVMLVGLFTALTNGFMGTTLTFA). Catalysis depends on residues histidine 468, tyrosine 477, and arginine 531.

It belongs to the polysaccharide lyase 8 family.

The protein resides in the secreted. The catalysed reaction is [hyaluronan](n) = n 3-(4-deoxy-beta-D-gluc-4-enuronosyl)-N-acetyl-D-glucosamine + H2O. It carries out the reaction Eliminative degradation of polysaccharides containing 1,4-beta-D-hexosaminyl and 1,3-beta-D-glucuronosyl linkages to disaccharides containing 4-deoxy-beta-D-gluc-4-enuronosyl groups.. Functionally, degrades hyaluronic acid (HA) and chondroitin sulfate (CS) A in vitro. Is not active against heparin sodium salt (HS). Involved in the pathogenesis of vancomycin-resistant E.faecalis infections. Contributes to attenuation of the lipopolysaccharide (LPS)-mediated nuclear factor (NF)-kappa-B activation assayed in the mouse RAW-Blue reporter macrophages. The chain is Hyaluronate lyase HylB from Enterococcus faecalis (strain ATCC 700802 / V583).